We begin with the raw amino-acid sequence, 61 residues long: uncharacterized protein (61 aa).

This is an uncharacterized protein from Bacillus subtilis (strain 168).